Consider the following 693-residue polypeptide: Translation factor GUF1 homolog, mitochondrial (693 aa).

The segment covering 51-63 (SSSSTEKPTTSGT) has biased composition (polar residues). A disordered region spans residues 51–78 (SSSSTEKPTTSGTINGGGGKQKAASQPK). Residues 88–270 (QKIRNFSIIA…RIVQMVPPPP (183 aa)) enclose the tr-type G domain. GTP contacts are provided by residues 97-104 (AHIDHGKS), 163-167 (DTPGH), and 217-220 (NKID).

This sequence belongs to the TRAFAC class translation factor GTPase superfamily. Classic translation factor GTPase family. LepA subfamily.

Its subcellular location is the mitochondrion inner membrane. It carries out the reaction GTP + H2O = GDP + phosphate + H(+). Promotes mitochondrial protein synthesis. May act as a fidelity factor of the translation reaction, by catalyzing a one-codon backward translocation of tRNAs on improperly translocated ribosomes. Binds to mitochondrial ribosomes in a GTP-dependent manner. In Phaeodactylum tricornutum (strain CCAP 1055/1), this protein is Translation factor GUF1 homolog, mitochondrial.